A 303-amino-acid chain; its full sequence is Putative S-adenosyl-L-methionine-dependent methyltransferase MAB_0213c (303 aa).

Residues Asp126 and 155–156 (DL) each bind S-adenosyl-L-methionine.

The protein belongs to the UPF0677 family.

Exhibits S-adenosyl-L-methionine-dependent methyltransferase activity. The protein is Putative S-adenosyl-L-methionine-dependent methyltransferase MAB_0213c of Mycobacteroides abscessus (strain ATCC 19977 / DSM 44196 / CCUG 20993 / CIP 104536 / JCM 13569 / NCTC 13031 / TMC 1543 / L948) (Mycobacterium abscessus).